Reading from the N-terminus, the 209-residue chain is Scoloptoxin SSD346 (209 aa).

Positions 1 to 22 (NILLSSTLFVLLMFQIIGSGLG) are cleaved as a signal peptide.

Post-translationally, contains 2 disulfide bonds. Expressed by the venom gland.

The protein resides in the secreted. May act as a voltage-gated calcium channel inhibitor. The chain is Scoloptoxin SSD346 from Scolopendra dehaani (Thai centipede).